The following is a 398-amino-acid chain: Enoyl-[acyl-carrier-protein] reductase [NADH] (398 aa).

NAD(+) is bound by residues 48–53 (GASTGY), 74–75 (FE), 111–112 (DA), and 139–140 (LA). Tyr-225 contributes to the substrate binding site. Residue Tyr-235 is the Proton donor of the active site. Residues Lys-244 and 273-275 (VVT) each bind NAD(+).

The protein belongs to the TER reductase family. As to quaternary structure, monomer.

It catalyses the reaction a 2,3-saturated acyl-[ACP] + NAD(+) = a (2E)-enoyl-[ACP] + NADH + H(+). It functions in the pathway lipid metabolism; fatty acid biosynthesis. In terms of biological role, involved in the final reduction of the elongation cycle of fatty acid synthesis (FAS II). Catalyzes the reduction of a carbon-carbon double bond in an enoyl moiety that is covalently linked to an acyl carrier protein (ACP). This is Enoyl-[acyl-carrier-protein] reductase [NADH] from Paraburkholderia phytofirmans (strain DSM 17436 / LMG 22146 / PsJN) (Burkholderia phytofirmans).